A 506-amino-acid polypeptide reads, in one-letter code: D-alanine--D-alanyl carrier protein ligase (506 aa).

Position 152-153 (152-153) interacts with ATP; that stretch reads TS. Position 197 (aspartate 197) interacts with D-alanine. 292 to 297 contacts ATP; sequence NTYGPT. Residue valine 301 coordinates D-alanine. Residues aspartate 383, 395–398, and lysine 494 each bind ATP; that span reads YRGR. D-alanine is bound at residue lysine 494.

The protein belongs to the ATP-dependent AMP-binding enzyme family. DltA subfamily.

It is found in the cytoplasm. It catalyses the reaction holo-[D-alanyl-carrier protein] + D-alanine + ATP = D-alanyl-[D-alanyl-carrier protein] + AMP + diphosphate. The protein operates within cell wall biogenesis; lipoteichoic acid biosynthesis. Its function is as follows. Catalyzes the first step in the D-alanylation of lipoteichoic acid (LTA), the activation of D-alanine and its transfer onto the D-alanyl carrier protein (Dcp) DltC. In an ATP-dependent two-step reaction, forms a high energy D-alanyl-AMP intermediate, followed by transfer of the D-alanyl residue as a thiol ester to the phosphopantheinyl prosthetic group of the Dcp. D-alanylation of LTA plays an important role in modulating the properties of the cell wall in Gram-positive bacteria, influencing the net charge of the cell wall. The chain is D-alanine--D-alanyl carrier protein ligase from Lacticaseibacillus paracasei (strain ATCC 334 / BCRC 17002 / CCUG 31169 / CIP 107868 / KCTC 3260 / NRRL B-441) (Lactobacillus paracasei).